The sequence spans 828 residues: Beta-galactosidase (828 aa).

Residues 1 to 20 (MKMKQFNLLSLFLILITSFG) form the signal peptide. Residues Asn-23 and Asn-153 are each glycosylated (N-linked (GlcNAc...) asparagine). The Proton donor role is filled by Glu-183. Residue Glu-252 is the Nucleophile of the active site. N-linked (GlcNAc...) asparagine glycosylation is found at Asn-253, Asn-350, Asn-379, Asn-492, Asn-667, Asn-799, and Asn-803. The SUEL-type lectin domain maps to 742-828 (AHEHNKVELS…PKRLFVEVEC (87 aa)).

It belongs to the glycosyl hydrolase 35 family.

The protein resides in the secreted. Its subcellular location is the extracellular space. It localises to the apoplast. It catalyses the reaction Hydrolysis of terminal non-reducing beta-D-galactose residues in beta-D-galactosides.. The sequence is that of Beta-galactosidase from Brassica oleracea (Wild cabbage).